A 279-amino-acid polypeptide reads, in one-letter code: 4-deoxy-L-threo-5-hexosulose-uronate ketol-isomerase (279 aa).

Zn(2+) contacts are provided by H197, H199, E204, and H246.

The protein belongs to the KduI family. Requires Zn(2+) as cofactor.

The enzyme catalyses 5-dehydro-4-deoxy-D-glucuronate = 3-deoxy-D-glycero-2,5-hexodiulosonate. It participates in glycan metabolism; pectin degradation; 2-dehydro-3-deoxy-D-gluconate from pectin: step 4/5. Catalyzes the isomerization of 5-dehydro-4-deoxy-D-glucuronate to 3-deoxy-D-glycero-2,5-hexodiulosonate. In Kineococcus radiotolerans (strain ATCC BAA-149 / DSM 14245 / SRS30216), this protein is 4-deoxy-L-threo-5-hexosulose-uronate ketol-isomerase.